The chain runs to 459 residues: Argininosuccinate lyase (459 aa).

The protein belongs to the lyase 1 family. Argininosuccinate lyase subfamily.

The protein resides in the cytoplasm. The catalysed reaction is 2-(N(omega)-L-arginino)succinate = fumarate + L-arginine. It participates in amino-acid biosynthesis; L-arginine biosynthesis; L-arginine from L-ornithine and carbamoyl phosphate: step 3/3. In Prochlorococcus marinus subsp. pastoris (strain CCMP1986 / NIES-2087 / MED4), this protein is Argininosuccinate lyase.